Here is a 193-residue protein sequence, read N- to C-terminus: Cell wall galactomannoprotein (193 aa).

The first 17 residues, 1–17 (MFFRILALLPLVFLVTA), serve as a signal peptide directing secretion. N-linked (GlcNAc...) asparagine glycans are attached at residues N38 and N173.

This sequence belongs to the cell wall mannoprotein 1 family. In terms of processing, galactomannoprotein, glycosylated.

The protein localises to the secreted. It localises to the cell wall. Constitutive protein of the cell wall. This chain is Cell wall galactomannoprotein, found in Armillaria ostoyae (Armillaria root rot fungus).